The following is a 578-amino-acid chain: Zinc finger-containing ubiquitin peptidase 1 (578 aa).

A C2H2-type 1 zinc finger spans residues 2–24 (LSCNICGETVTSEPDMKAHLIVH). The segment at 29-52 (IICPFCKLSGVNYDEMCFHIETAH) adopts a C2H2-type 2; atypical zinc-finger fold. 2 C2H2-type zinc fingers span residues 154–177 (PECP…KTKH) and 193–215 (YDCP…VDLH). The interval 226–248 (DRVQCSGDLQLAHQLQQEEDRKR) is MIU. The tract at residues 249–274 (RSEESRQEIEEFQKLQRQYGLDNSGG) is zUBD/ZHA. At K262 the chain carries N6-acetyllysine. C360 functions as the Nucleophile in the catalytic mechanism. H491 serves as the catalytic Proton acceptor. D512 is a catalytic residue.

It belongs to the peptidase C78 family. ZUFSP subfamily. Interacts with RPA1 and RPA2.

It is found in the cytoplasm. The protein localises to the nucleus. The catalysed reaction is Thiol-dependent hydrolysis of ester, thioester, amide, peptide and isopeptide bonds formed by the C-terminal Gly of ubiquitin (a 76-residue protein attached to proteins as an intracellular targeting signal).. In terms of biological role, deubiquitinase with endodeubiquitinase activity that specifically interacts with and cleaves 'Lys-63'-linked long polyubiquitin chains. Shows only weak activity against 'Lys-11' and 'Lys-48'-linked chains. Plays an important role in genome stability pathways, functioning to prevent spontaneous DNA damage and also promote cellular survival in response to exogenous DNA damage. Modulates the ubiquitination status of replication protein A (RPA) complex proteins in response to replication stress. This is Zinc finger-containing ubiquitin peptidase 1 from Homo sapiens (Human).